Reading from the N-terminus, the 863-residue chain is Autotaxin (863 aa).

Residues 1-27 form the signal peptide; sequence MARRSSFQSCQIISLFTFAVGVNICLG. Positions 28-35 are cleaved as a propeptide — removed by furin; that stretch reads FTAHRIKR. Asn54 carries N-linked (GlcNAc...) asparagine glycosylation. 2 consecutive SMB domains span residues 55–98 and 99–143; these read ISGS…LKTA and RGWE…GESH. Cystine bridges form between Cys59–Cys76, Cys63–Cys94, Cys74–Cys87, Cys80–Cys86, Cys103–Cys120, Cys108–Cys138, Cys118–Cys131, Cys124–Cys130, Cys149–Cys195, and Cys157–Cys351. Residues 127–129 carry the Cell attachment site motif; sequence RGD. Residues 145-502 are phosphodiesterase; it reads VDDDCEEIKA…STFKYKTKVP (358 aa). Positions 172 and 210 each coordinate Zn(2+). Thr210 serves as the catalytic Nucleophile. Positions 210, 231, and 312 each coordinate 1-(9Z-octadecenoyl)-sn-glycero-3-phosphate. 1-hexadecanoyl-sn-glycero-3-phosphate contacts are provided by Thr210, Asn231, and Asp312. Residues Thr210, Asn231, and Asp312 each coordinate 1-tetradecanoyl-sn-glycerol 3-phosphate. The Zn(2+) site is built by Asp312, His316, Asp359, and His360. Intrachain disulfides connect Cys367–Cys469, Cys414–Cys806, Cys567–Cys667, Cys569–Cys652, and Cys775–Cys785. Asn411 carries an N-linked (GlcNAc...) asparagine glycan. His475 serves as a coordination point for Zn(2+). His475 provides a ligand contact to 1-(9Z-octadecenoyl)-sn-glycero-3-phosphate. A 1-hexadecanoyl-sn-glycero-3-phosphate-binding site is contributed by His475. A 1-tetradecanoyl-sn-glycerol 3-phosphate-binding site is contributed by His475. A glycan (N-linked (GlcNAc...) asparagine) is linked at Asn525. Positions 598-863 are nuclease-like domain; that stretch reads LYGRPAVLYR…TYLHTYESEI (266 aa). Ca(2+)-binding residues include Asp740, Asp742, Asp744, Leu746, and Asp748. The N-linked (GlcNAc...) asparagine glycan is linked to Asn807. The segment at 830–851 is required for secretion; that stretch reads IEHLTSLDFFRKTSRSYPEILT.

This sequence belongs to the nucleotide pyrophosphatase/phosphodiesterase family. The cofactor is Zn(2+). It depends on Ca(2+) as a cofactor. Post-translationally, N-glycosylation, but not furin-cleavage, plays a critical role on secretion and on lysoPLD activity. In terms of processing, the interdomain disulfide bond between Cys-414 and Cys-806 is essential for catalytic activity. In terms of tissue distribution, detected in blood plasma (at protein level). Predominantly expressed in brain, placenta, ovary, and small intestine. Expressed in a number of carcinomas such as hepatocellular and prostate carcinoma, neuroblastoma and non-small-cell lung cancer. Expressed in body fluids such as plasma, cerebral spinal fluid (CSF), saliva, follicular and amniotic fluids. Not detected in leukocytes. Isoform 1 is more highly expressed in peripheral tissues than in the central nervous system (CNS). Adipocytes only express isoform 1. Isoform 3 is more highly expressed in the brain than in peripheral tissues.

Its subcellular location is the secreted. It carries out the reaction a 1-O-alkyl-sn-glycero-3-phosphoethanolamine + H2O = a 1-O-alkyl-sn-glycero-3-phosphate + ethanolamine + H(+). The catalysed reaction is a 1-acyl-sn-glycero-3-phosphoethanolamine + H2O = a 1-acyl-sn-glycero-3-phosphate + ethanolamine + H(+). It catalyses the reaction 1-(9Z-octadecenoyl)-sn-glycero-3-phosphoethanolamine + H2O = 1-(9Z-octadecenoyl)-sn-glycero-3-phosphate + ethanolamine + H(+). The enzyme catalyses a 1-O-alkyl-sn-glycero-3-phosphocholine + H2O = a 1-O-alkyl-sn-glycero-3-phosphate + choline + H(+). It carries out the reaction 1-O-(9Z-octadecenyl)-sn-glycero-3-phosphocholine + H2O = 1-O-(9Z-octadecenyl)-sn-glycero-3-phosphate + choline + H(+). The catalysed reaction is 1-O-hexadecyl-sn-glycero-3-phosphocholine + H2O = 1-O-hexadecyl-sn-glycero-3-phosphate + choline + H(+). It catalyses the reaction a 1-O-(1Z-alkenyl)-sn-glycero-3-phosphocholine + H2O = a 1-O-(1Z-alkenyl)-sn-glycero-3-phosphate + choline + H(+). The enzyme catalyses a 1-acyl-sn-glycero-3-phosphocholine + H2O = a 1-acyl-sn-glycero-3-phosphate + choline + H(+). It carries out the reaction 1-dodecanoyl-sn-glycero-3-phosphocholine + H2O = 1-dodecanoyl-sn-glycerol 3-phosphate + choline + H(+). The catalysed reaction is 1-(9Z-octadecenoyl)-sn-glycero-3-phosphocholine + H2O = 1-(9Z-octadecenoyl)-sn-glycero-3-phosphate + choline + H(+). It catalyses the reaction 1-tetradecanoyl-sn-glycero-3-phosphocholine + H2O = 1-tetradecanoyl-sn-glycerol 3-phosphate + choline + H(+). The enzyme catalyses 1-decanoyl-sn-glycero-3-phosphocholine + H2O = 1-decanoyl-sn-glycero-3-phosphate + choline + H(+). It carries out the reaction 1-octadecanoyl-sn-glycero-3-phosphocholine + H2O = 1-octadecanoyl-sn-glycero-3-phosphate + choline + H(+). The catalysed reaction is 1-hexadecanoyl-sn-glycero-3-phosphocholine + H2O = 1-hexadecanoyl-sn-glycero-3-phosphate + choline + H(+). It catalyses the reaction 1-hexanoyl-sn-glycero-3-phosphocholine + H2O = 1-hexanoyl-sn-glycero-3-phosphate + choline + H(+). The enzyme catalyses 1-(9Z,12Z)-octadecadienoyl-sn-glycero-3-phosphocholine + H2O = 1-(9Z,12Z)-octadecadienoyl-sn-glycero-3-phosphate + choline + H(+). It carries out the reaction sphing-4-enine-phosphocholine + H2O = sphing-4-enine 1-phosphate + choline + H(+). The catalysed reaction is 1-(5Z,8Z,11Z,14Z-eicosatetraenoyl)-sn-glycero-3-phosphocholine + H2O = 1-(5Z,8Z,11Z,14Z-eicosatetraenoyl)-sn-glycero-3-phosphate + choline + H(+). It catalyses the reaction a 2-acyl-sn-glycero-3-phosphocholine + H2O = a 2-acyl-sn-glycerol 3-phosphate + choline + H(+). The enzyme catalyses a 1,2-diacyl-sn-glycero-3-phosphocholine + H2O = a 1,2-diacyl-sn-glycero-3-phosphate + choline + H(+). It carries out the reaction 1,2-dioctanoyl-sn-glycero-3-phosphocholine + H2O = 1,2-dioctanoyl-sn-glycero-3-phosphate + choline + H(+). The catalysed reaction is 1,2-didecanoyl-sn-glycero-3-phosphocholine + H2O = 1,2-didecanoyl-sn-glycero-3-phosphate + choline + H(+). It catalyses the reaction a 1-acyl-sn-glycero-3-phospho-L-serine + H2O = a 1-acyl-sn-glycero-3-phosphate + L-serine + H(+). The enzyme catalyses 1-(9Z-octadecenoyl)-sn-glycero-3-phospho-L-serine + H2O = 1-(9Z-octadecenoyl)-sn-glycero-3-phosphate + L-serine + H(+). It carries out the reaction a 2-acyl-sn-glycero-3-phospho-L-serine + H2O = a 2-acyl-sn-glycerol 3-phosphate + L-serine + H(+). Its activity is regulated as follows. Inhibited by lysophosphatidic acid (LPA) and sphingosine-1-phosphate (S1P). Inhibited by EDTA and EGTA. Secreted lysophospholipase D that hydrolyzes lysophospholipids to produce the signaling molecule lysophosphatidic acid (LPA) in extracellular fluids. Its major substrate is lysophosphatidylcholine. Can also act on sphingosylphosphorylcholine producing sphingosine-1-phosphate, a modulator of cell motility. Can hydrolyze, in vitro, bis-pNPP, to some extent pNP-TMP, and barely ATP. Involved in several motility-related processes such as angiogenesis and neurite outgrowth. Acts as an angiogenic factor by stimulating migration of smooth muscle cells and microtubule formation. Stimulates migration of melanoma cells, probably via a pertussis toxin-sensitive G protein. May have a role in induction of parturition. Possible involvement in cell proliferation and adipose tissue development. Required for LPA production in activated platelets, cleaves the sn-1 lysophospholipids to generate sn-1 lysophosphatidic acids containing predominantly 18:2 and 20:4 fatty acids. Shows a preference for the sn-1 to the sn-2 isomer of 1-O-alkyl-sn-glycero-3-phosphocholine (lyso-PAF). This Homo sapiens (Human) protein is Autotaxin.